Reading from the N-terminus, the 384-residue chain is Troponin T (384 aa).

A compositionally biased stretch (acidic residues) spans 1-15 (MSDEEEYSEEEEEVP). Disordered regions lie at residues 1-23 (MSDE…PRHS), 61-169 (RAKE…KEQL), 237-257 (LRHK…KYPP), and 313-384 (PKWF…EEEE). 2 stretches are compositionally biased toward basic and acidic residues: residues 61-74 (RAKE…LKDK) and 81-126 (MRAD…EKKR). Residues 316 to 327 (FGERPGKKKGDP) show a composition bias toward basic and acidic residues. The segment covering 328–384 (ESPEEEEVKADAGVDDELEEPTFEPEPEPEPEEEAAEEEAEEEEEEEEEEEEEEEEE) has biased composition (acidic residues).

Belongs to the troponin T family.

Troponin T is the tropomyosin-binding subunit of troponin, the thin filament regulatory complex which confers calcium-sensitivity to striated muscle actomyosin ATPase activity. This is Troponin T (TNT) from Periplaneta americana (American cockroach).